We begin with the raw amino-acid sequence, 447 residues long: GTPase Der (447 aa).

EngA-type G domains lie at 4–165 (QIIT…PEEE) and 180–357 (LQIV…KIWN). GTP-binding positions include 10–17 (GRPNVGKS), 57–61 (DTPGL), 119–122 (NKCE), 186–193 (GRPNAGKS), 233–237 (DTAGL), and 298–301 (NKWD). Residues 358-443 (KKITTSKLNE…PIRFIYVKTK (86 aa)) enclose the KH-like domain.

Belongs to the TRAFAC class TrmE-Era-EngA-EngB-Septin-like GTPase superfamily. EngA (Der) GTPase family. In terms of assembly, associates with the 50S ribosomal subunit.

Functionally, GTPase that plays an essential role in the late steps of ribosome biogenesis. The chain is GTPase Der from Rickettsia africae (strain ESF-5).